We begin with the raw amino-acid sequence, 507 residues long: Beta-Ala-His dipeptidase (507 aa).

Residues 1 to 26 (MDPKLGRMAASLLAVLLLLLERGMFS) form the signal peptide. Histidine 132 serves as a coordination point for Zn(2+). Residue aspartate 134 is part of the active site. Aspartate 165 serves as a coordination point for Zn(2+). Glutamate 199 functions as the Proton acceptor in the catalytic mechanism. Glutamate 200 contributes to the Zn(2+) binding site. Residue serine 219 is modified to Phosphoserine. Aspartate 228 is a binding site for Zn(2+). 2 N-linked (GlcNAc...) asparagine glycosylation sites follow: asparagine 322 and asparagine 382. Residue histidine 478 participates in Zn(2+) binding.

Belongs to the peptidase M20A family. In terms of assembly, homodimer. The cofactor is Zn(2+). In terms of tissue distribution, found in serum and adult nervous central system. Absent in serum from patients with homocarnosinosis.

It localises to the secreted. It carries out the reaction Preferential hydrolysis of the beta-Ala-|-His dipeptide (carnosine), and also anserine, Xaa-|-His dipeptides and other dipeptides including homocarnosine.. It catalyses the reaction carnosine + H2O = beta-alanine + L-histidine. The enzyme catalyses anserine + H2O = N(pros)-methyl-L-histidine + beta-alanine. The catalysed reaction is L-alanyl-L-histidine + H2O = L-histidine + L-alanine. It carries out the reaction glycyl-L-histidine + H2O = L-histidine + glycine. It catalyses the reaction L-homocarnosine + H2O = 4-aminobutanoate + L-histidine. Its activity is regulated as follows. Activated by cadmium ions. Inhibited by the metal chelator 1,10-o-phenantrolin. The inhibitory concentration 50% (IC(50)) is 5 uM. Catalyzes the peptide bond hydrolysis in Xaa-His dipeptides, displaying the highest activity toward carnosine (beta-alanyl-L-histidine) and anserine (beta-alanyl-3-methyl-histidine). The sequence is that of Beta-Ala-His dipeptidase from Homo sapiens (Human).